A 111-amino-acid chain; its full sequence is DNA-binding protein AF_2068 (111 aa).

This sequence belongs to the PDCD5 family.

This Archaeoglobus fulgidus (strain ATCC 49558 / DSM 4304 / JCM 9628 / NBRC 100126 / VC-16) protein is DNA-binding protein AF_2068.